Here is a 182-residue protein sequence, read N- to C-terminus: UPF0200 protein Mthe_1012 (182 aa).

8-15 contributes to the ATP binding site; the sequence is GMPGSGKS.

Belongs to the UPF0200 family.

The chain is UPF0200 protein Mthe_1012 from Methanothrix thermoacetophila (strain DSM 6194 / JCM 14653 / NBRC 101360 / PT) (Methanosaeta thermophila).